Here is a 269-residue protein sequence, read N- to C-terminus: 3-methyl-2-oxobutanoate hydroxymethyltransferase (269 aa).

Aspartate 43 and aspartate 82 together coordinate Mg(2+). 3-methyl-2-oxobutanoate is bound by residues 43–44, aspartate 82, and lysine 110; that span reads DS. Glutamate 112 is a Mg(2+) binding site. The Proton acceptor role is filled by glutamate 179.

This sequence belongs to the PanB family. As to quaternary structure, homodecamer; pentamer of dimers. The cofactor is Mg(2+).

It localises to the cytoplasm. The enzyme catalyses 3-methyl-2-oxobutanoate + (6R)-5,10-methylene-5,6,7,8-tetrahydrofolate + H2O = 2-dehydropantoate + (6S)-5,6,7,8-tetrahydrofolate. It functions in the pathway cofactor biosynthesis; (R)-pantothenate biosynthesis; (R)-pantoate from 3-methyl-2-oxobutanoate: step 1/2. Functionally, catalyzes the reversible reaction in which hydroxymethyl group from 5,10-methylenetetrahydrofolate is transferred onto alpha-ketoisovalerate to form ketopantoate. This is 3-methyl-2-oxobutanoate hydroxymethyltransferase from Acinetobacter baumannii (strain SDF).